The primary structure comprises 283 residues: Peroxisomal protein 2 (283 aa).

The short motif at 281 to 283 is the Peroxisomal target signal 1 (PTS1) element; sequence VKL.

It belongs to the PXP2 family.

The protein resides in the peroxisome matrix. The protein localises to the cytoplasm. It localises to the cytosol. Functionally, probably involved in peroxisome formation or maintenance as well as in amino acid metabolism. In Saccharomyces cerevisiae (strain ATCC 204508 / S288c) (Baker's yeast), this protein is Peroxisomal protein 2.